Reading from the N-terminus, the 310-residue chain is Spermatid maturation protein 1 (310 aa).

Residues 29-49 (ILLLLGLIVCINIGINLVTLL) form a helical membrane-spanning segment. Positions 215-238 (ALSHKNNAAGSGGCVEGEQAQGQP) are disordered. A coiled-coil region spans residues 262-286 (VYDARDVRRRLRELTQEVEALSHCY).

Testis-specific. Exclusively present in cytoplasm of steps 14-16 elongated spermatids (at protein level).

It is found in the membrane. The protein localises to the cytoplasm. Functionally, required for proper cytoplasm removal during spermatogenesis. The polypeptide is Spermatid maturation protein 1 (Spem1) (Mus musculus (Mouse)).